Reading from the N-terminus, the 74-residue chain is Translational regulator CsrA (74 aa).

This sequence belongs to the CsrA/RsmA family. Homodimer; the beta-strands of each monomer intercalate to form a hydrophobic core, while the alpha-helices form wings that extend away from the core.

It localises to the cytoplasm. Its function is as follows. A translational regulator that binds mRNA to regulate translation initiation and/or mRNA stability. Usually binds in the 5'-UTR at or near the Shine-Dalgarno sequence preventing ribosome-binding, thus repressing translation. Its main target seems to be the major flagellin gene, while its function is anatagonized by FliW. The polypeptide is Translational regulator CsrA (Bacillus velezensis (strain DSM 23117 / BGSC 10A6 / LMG 26770 / FZB42) (Bacillus amyloliquefaciens subsp. plantarum)).